The chain runs to 531 residues: Apolipoprotein N-acyltransferase (531 aa).

The next 7 helical transmembrane spans lie at Ile-8–Val-28, Phe-34–Val-54, Pro-69–Gly-89, Leu-105–Ala-125, Ile-136–Gly-156, Val-178–Ile-198, and Gly-207–Ala-227. Positions Val-243–Gly-493 constitute a CN hydrolase domain. The Proton acceptor role is filled by Glu-287. The active site involves Lys-351. The active-site Nucleophile is the Cys-405. A helical transmembrane segment spans residues Ile-507–Asn-527.

The protein belongs to the CN hydrolase family. Apolipoprotein N-acyltransferase subfamily.

The protein resides in the cell inner membrane. It catalyses the reaction N-terminal S-1,2-diacyl-sn-glyceryl-L-cysteinyl-[lipoprotein] + a glycerophospholipid = N-acyl-S-1,2-diacyl-sn-glyceryl-L-cysteinyl-[lipoprotein] + a 2-acyl-sn-glycero-3-phospholipid + H(+). Its pathway is protein modification; lipoprotein biosynthesis (N-acyl transfer). Functionally, catalyzes the phospholipid dependent N-acylation of the N-terminal cysteine of apolipoprotein, the last step in lipoprotein maturation. The chain is Apolipoprotein N-acyltransferase from Sinorhizobium medicae (strain WSM419) (Ensifer medicae).